Consider the following 130-residue polypeptide: Small ribosomal subunit protein uS11 (130 aa).

It belongs to the universal ribosomal protein uS11 family. In terms of assembly, part of the 30S ribosomal subunit. Interacts with proteins S7 and S18. Binds to IF-3.

Its function is as follows. Located on the platform of the 30S subunit, it bridges several disparate RNA helices of the 16S rRNA. Forms part of the Shine-Dalgarno cleft in the 70S ribosome. This Blochmanniella floridana protein is Small ribosomal subunit protein uS11.